The following is a 528-amino-acid chain: OLD nuclease (528 aa).

The ATPase domain N-terminus stretch occupies residues 1 to 153; the sequence is MLKRLQVKNF…LAQHLPSIRG (153 aa). An ATP-binding site is contributed by 31-35; the sequence is GAGKT. The tract at residues 154-245 is dimerization domain; it reads SILGRLLQPV…RESDLTLPGD (92 aa). The tract at residues 246-369 is ATPase domain C-terminus; sequence ELGLGIQSAI…FDTARNEVLF (124 aa). The segment at 370 to 528 is toprim domain; that stretch reads AKRALLVEGY…IRQVTRPMEE (159 aa). The a divalent metal cation site is built by E377, D381, D431, and D433. A disordered region spans residues 440-461; that stretch reads RADEETRRKQEQENKAEQEKNQ. The a divalent metal cation site is built by S478 and E480. R487 (stabilizes transition state or protonates leaving group) is an active-site residue.

It belongs to the class 1 OLD nuclease family. In terms of assembly, homodimer. The cofactor is Mg(2+). Mn(2+) is required as a cofactor. It depends on Ca(2+) as a cofactor.

It catalyses the reaction Exonucleolytic cleavage in the 5'- to 3'-direction to yield nucleoside 5'-phosphates.. An exodeoxyribonuclease that degrades linear or supercoiled dsDNA from 5'-3'. Nicks and linearizes circular DNA. Activity is not stimulated by ATP or AMP-PNP, although it has DNA-stimulated ATPase activity. The protein is OLD nuclease of Thermus scotoductus (strain ATCC 700910 / SA-01).